Here is a 611-residue protein sequence, read N- to C-terminus: Muscarinic acetylcholine receptor gar-3 (611 aa).

Residues M1–M67 are Extracellular-facing. Residues N28 and N33 are each glycosylated (N-linked (GlcNAc...) asparagine). A helical membrane pass occupies residues I68–V88. At S89 to N101 the chain is on the cytoplasmic side. The helical transmembrane segment at Y102–F122 threads the bilayer. Residues T123–F140 lie on the Extracellular side of the membrane. A disulfide bond links C138 and C218. The helical transmembrane segment at W141–F161 threads the bilayer. Over D162–K181 the chain is Cytoplasmic. The chain crosses the membrane as a helical span at residues A182 to I202. Residues S203–P227 are Extracellular-facing. Residues Y228–L248 form a helical membrane-spanning segment. Residues Y249–T525 are Cytoplasmic-facing. Disordered regions lie at residues R299 to A364, S377 to S432, S446 to I477, and F500 to E519. The segment covering S307–S317 has biased composition (low complexity). Residues Q503–E519 show a composition bias toward basic and acidic residues. Residues L526–W546 form a helical membrane-spanning segment. Residues E547–V557 lie on the Extracellular side of the membrane. A helical transmembrane segment spans residues L558 to A578. Over L579 to N611 the chain is Cytoplasmic.

It belongs to the G-protein coupled receptor 1 family. Muscarinic acetylcholine receptor subfamily.

Its subcellular location is the cell membrane. In terms of biological role, the muscarinic acetylcholine receptor mediates various cellular responses, including inhibition of adenylate cyclase, breakdown of phosphoinositides and modulation of potassium channels through the action of G proteins. Primary transducing effect is Pi turnover. Enhances the release of the neurotransmitter acetlycholine in cholinergic motor neurons, which in turn positively feeds back to depolarize body wall muscles and allows for the maintenance of normal body posture and locomotion. The polypeptide is Muscarinic acetylcholine receptor gar-3 (gar-3) (Caenorhabditis elegans).